Reading from the N-terminus, the 174-residue chain is MGKITLYEDRGFQGRHYECSSDHPNLQPYLSRCNSARVDSGCWMLYEQPNYSGLQYFLRRGDYADHQQWMGLSDSVRSCRLIPHSGSHRIRLYEREDYRGQMIEFTEDCSCLQDRFRFNEIHSLNVLEGSWVLYELSNYRGRQYLLMPGDYRRYQDWGATNARVGSLRRVIDFS.

2 consecutive Beta/gamma crystallin 'Greek key' domains span residues 2–40 and 41–83; these read GKIT…RVDS and GCWM…RLIP. A connecting peptide region spans residues 84-87; the sequence is HSGS. 2 Beta/gamma crystallin 'Greek key' domains span residues 88 to 128 and 129 to 171; these read HRIR…NVLE and GSWV…RRVI.

It belongs to the beta/gamma-crystallin family. In terms of assembly, monomer.

Crystallins are the dominant structural components of the vertebrate eye lens. The chain is Gamma-crystallin D (CRYGD) from Homo sapiens (Human).